The primary structure comprises 179 residues: Endoribonuclease YbeY (179 aa).

Zn(2+)-binding residues include histidine 148, histidine 152, and histidine 158.

The protein belongs to the endoribonuclease YbeY family. The cofactor is Zn(2+).

The protein localises to the cytoplasm. Functionally, single strand-specific metallo-endoribonuclease involved in late-stage 70S ribosome quality control and in maturation of the 3' terminus of the 16S rRNA. This Prochlorococcus marinus (strain AS9601) protein is Endoribonuclease YbeY.